The chain runs to 1318 residues: Putative tetratricopeptide repeat protein 41 (1318 aa).

TPR repeat units follow at residues 399–432, 653–684, 817–850, 858–891, 991–1027, and 1045–1082; these read TQLETDILNEDSDGLVFSFLVEVFIASISLKPCI, WVQEKPNGLLYFWHQSLSAVEHKLLGVITPVE, CRLMFFIGSFLKFMGKTNEAEELFLSVEDMLVQS, LKVQNAIGELYLETGMTQEGFQYFQKAWSSMLRL, MEFLADLLFFPQRDSKKSQRKQVLKYYKQVIKIKENA, and SDTLCKLAGHLLASDSCHHVMIEAVGYLYRSVDLRVIH.

Its subcellular location is the cytoplasm. The protein is Putative tetratricopeptide repeat protein 41 of Homo sapiens (Human).